The primary structure comprises 101 residues: Small ribosomal subunit protein uS14 (101 aa).

This sequence belongs to the universal ribosomal protein uS14 family. As to quaternary structure, part of the 30S ribosomal subunit. Contacts proteins S3 and S10.

Its function is as follows. Binds 16S rRNA, required for the assembly of 30S particles and may also be responsible for determining the conformation of the 16S rRNA at the A site. This chain is Small ribosomal subunit protein uS14, found in Polynucleobacter asymbioticus (strain DSM 18221 / CIP 109841 / QLW-P1DMWA-1) (Polynucleobacter necessarius subsp. asymbioticus).